Reading from the N-terminus, the 241-residue chain is Prolactin-8A8 (241 aa).

The N-terminal stretch at 1-30 (MELQFRQPHFSDALLLLLLSNLLLWEKASS) is a signal peptide. Disulfide bonds link C34/C41, C101/C217, and C234/C241. Residue N213 is glycosylated (N-linked (GlcNAc...) asparagine).

It belongs to the somatotropin/prolactin family. In terms of tissue distribution, expressed specifically in the placenta. Predominantly expressed in spongiotrophoblast cells.

Its subcellular location is the secreted. The protein is Prolactin-8A8 (Prl8a8) of Mus musculus (Mouse).